The following is a 1575-amino-acid chain: Mediator of RNA polymerase II transcription subunit 1 (1575 aa).

Residues 1-670 (MKAQGETEDS…YGSSPLERQN (670 aa)) are interaction with the Mediator complex and THRA. The interval 16–590 (MSSLLERLHA…SIKDRHESVG (575 aa)) is interaction with ESR1. Interaction with the Mediator complex stretches follow at residues 108-212 (FYVE…GYLT) and 215-390 (SGGH…SLQG). The interval 405 to 644 (PLILNMIRHQ…MAGNTKNHPM (240 aa)) is interaction with THRA. The interval 542 to 789 (PASSPGYGMT…TDILSDIAEE (248 aa)) is interaction with VDR. Position 588 is a phosphoserine (serine 588). Positions 604–608 (LTSLL) match the LXXLL motif 1 motif. Disordered regions lie at residues 609–706 (QITG…QTED), 737–760 (HITP…SHPQ), 791–818 (SKLP…HSQS), 874–895 (SQSG…NDDF), and 951–1564 (SGSQ…GEED). Over residues 622-632 (PTPPHHTPPPV) the composition is skewed to pro residues. The interval 622–701 (PTPPHHTPPP…SSRVPPDKPK (80 aa)) is interaction with GATA1. The interaction with PPARGC1A and THRA stretch occupies residues 622-701 (PTPPHHTPPP…SSRVPPDKPK (80 aa)). Positions 645-649 (LMNLL) match the LXXLL motif 2 motif. Polar residues predominate over residues 655–675 (QDFSTLYGSSPLERQNSSSGS). Residues 656 to 1066 (DFSTLYGSSP…TPPIPKITIQ (411 aa)) are interaction with ESR1. Serine 664 is subject to Phosphoserine. The segment covering 696 to 706 (PPDKPKHQTED) has biased composition (basic and acidic residues). At serine 795 the chain carries Phosphoserine. Residue threonine 805 is modified to Phosphothreonine. The segment covering 808–818 (RDSSSSGHSQS) has biased composition (polar residues). The Integrase domain-binding motif (IBM) signature appears at 875 to 902 (QSGFGEEYFDESSQSGDNDDFKGFASQA). Phosphoserine occurs at positions 887, 953, and 955. A compositionally biased stretch (basic and acidic residues) spans 963–974 (LGKEKTQKRVKE). Residues 976 to 986 (NGTGASSGSGP) are compositionally biased toward gly residues. Threonine 1032 carries the post-translational modification Phosphothreonine; by MAPK1 or MAPK3. The span at 1034 to 1051 (PTSTGGSKSPGSSGRSQT) shows a compositional bias: low complexity. Threonine 1051 and threonine 1057 each carry phosphothreonine. Composition is skewed to low complexity over residues 1078–1094 (SSHS…SSGS) and 1101–1152 (SSSS…SQTG). At serine 1158 the chain carries Phosphoserine. Polar residues predominate over residues 1158–1184 (SPITKHGLSSGSSSTKMKPQGKPSSLM). The residue at position 1179 (lysine 1179) is an N6-acetyllysine. Over residues 1185-1197 (NPSISKPNISPSH) the composition is skewed to low complexity. The residue at position 1209 (serine 1209) is a Phosphoserine. The residue at position 1217 (threonine 1217) is a Phosphothreonine. 2 stretches are compositionally biased toward low complexity: residues 1220 to 1258 (SSKA…GSVS) and 1265 to 1295 (SNSC…SKGK). Serine 1225 carries the phosphoserine modification. The interaction with TP53 stretch occupies residues 1251-1423 (SASSGSVSQK…KPGESGGDGL (173 aa)). A phosphoserine mark is found at serine 1304 and serine 1349. Residues 1331-1352 (MGASTNSSNHPMSSKHNTSGGE) show a composition bias toward polar residues. Positions 1354–1366 (QSKREKSDKDKSK) are enriched in basic and acidic residues. Residues serine 1405 and serine 1435 each carry the phosphoserine modification. 2 stretches are compositionally biased toward polar residues: residues 1427–1442 (IASS…SGST) and 1450–1484 (PSHS…SPSS). Threonine 1442 is modified (phosphothreonine). Residue threonine 1459 is modified to Phosphothreonine; by MAPK1 or MAPK3. Phosphoserine is present on residues serine 1465, serine 1467, serine 1481, serine 1483, and serine 1484. Over residues 1498–1507 (KHKKHKKEKK) the composition is skewed to basic residues. The residue at position 1523 (lysine 1523) is an N6-acetyllysine. Positions 1527–1545 (WSKSPISSDPTASVTNNPI) are enriched in polar residues.

It belongs to the Mediator complex subunit 1 family. As to quaternary structure, component of the Mediator complex, which is composed of MED1, MED4, MED6, MED7, MED8, MED9, MED10, MED11, MED12, MED13, MED13L, MED14, MED15, MED16, MED17, MED18, MED19, MED20, MED21, MED22, MED23, MED24, MED25, MED26, MED27, MED29, MED30, MED31, CCNC, CDK8 and CDC2L6/CDK11. The MED12, MED13, CCNC and CDK8 subunits form a distinct module termed the CDK8 module. Mediator containing the CDK8 module is less active than Mediator lacking this module in supporting transcriptional activation. Individual preparations of the Mediator complex lacking one or more distinct subunits have been variously termed ARC, CRSP, DRIP, PC2, SMCC and TRAP. This subunit specifically interacts with a number of nuclear receptors in a ligand-dependent fashion including AR, ESR1, ESR2, PPARA, PPARG, RORA, RXRA, RXRG, THRA, THRB and VDR. Interacts with CTNNB1, GABPA, GLI3, PPARGC1A and TP53. Interacts with GATA1 and YWHAH. Interacts with CLOCK; this interaction requires the presence of THRAP3. Interacts with CCAR1. Interacts with NR4A3. Interacts (via IBM motif) with PSIP1 (via IBD domain); phosphorylation increases its affinity for PSIP1. Interacts with USP22. In terms of processing, phosphorylated by MAPK1 or MAPK3 during G2/M phase which may enhance protein stability and promote entry into the nucleolus. Phosphorylation increases its interaction with PSIP1. As to expression, widely expressed in the adult, with high levels of expression in the liver, lung, intestinal mucosa, kidney cortex, thymic cortex, splenic follicle and seminiferous epithelium in testis. Also expressed in the adult heart, brain, spleen and skeletal muscle.

Its subcellular location is the nucleus. Its function is as follows. Component of the Mediator complex, a coactivator involved in the regulated transcription of nearly all RNA polymerase II-dependent genes. Mediator functions as a bridge to convey information from gene-specific regulatory proteins to the basal RNA polymerase II transcription machinery. Mediator is recruited to promoters by direct interactions with regulatory proteins and serves as a scaffold for the assembly of a functional preinitiation complex with RNA polymerase II and the general transcription factors. Essential for embryogenesis, including development of the central nervous system, heart, liver and placenta and for erythropoiesis. Also required for normal transcriptional control of thyroid-stimulating hormone beta (TSHB) in the pituitary. Acts as a coactivator for GATA1-mediated transcriptional activation during erythroid differentiation of K562 erythroleukemia cells. This chain is Mediator of RNA polymerase II transcription subunit 1 (Med1), found in Mus musculus (Mouse).